A 304-amino-acid chain; its full sequence is Opsin-1 (304 aa).

Residues 1 to 45 (MIHPEQVADMLRPTTSTTSSHVPGPVPTVVPTPTEYQTLGETGHR) lie on the Extracellular side of the membrane. A helical membrane pass occupies residues 46–66 (TLWVTFALMVLSSGIFALLSW). The chain crosses the membrane as a helical span at residues 74–94 (LFHVITTLITVVASLSYFAMA). A helical transmembrane segment spans residues 129 to 149 (YVDWALTTPLLLLELCLLAGV). A helical transmembrane segment spans residues 154-174 (TLMAIVADVIMVLCGLFAALG). A helical transmembrane segment spans residues 183–203 (WGWYTIGCFSYLFVIWHVALH). A helical membrane pass occupies residues 219 to 239 (FTGLAVFALLLWTAYPIIWGI). A helical membrane pass occupies residues 252-272 (ILIYTVLDLLAKPVFGFWLLL). At Lys263 the chain carries N6-(retinylidene)lysine. At 273–304 (SHRAMPETNIDLPGYWSHGLATEGRIRIGEED) the chain is on the cytoplasmic side.

This sequence belongs to the archaeal/bacterial/fungal opsin family. In terms of processing, binds all-trans retinal via a protonated Schiff base linkage.

It is found in the membrane. Its function is as follows. Could facilitate a sensory photoresponse. This is Opsin-1 (nop-1) from Neurospora crassa (strain ATCC 24698 / 74-OR23-1A / CBS 708.71 / DSM 1257 / FGSC 987).